The primary structure comprises 110 residues: Insulin (110 aa).

An N-terminal signal peptide occupies residues M1 to A24. Intrachain disulfides connect C31/C96, C43/C109, and C95/C100. A propeptide spans E57–Q87 (c peptide).

Belongs to the insulin family. Heterodimer of a B chain and an A chain linked by two disulfide bonds.

It is found in the secreted. Insulin decreases blood glucose concentration. It increases cell permeability to monosaccharides, amino acids and fatty acids. It accelerates glycolysis, the pentose phosphate cycle, and glycogen synthesis in liver. This Chlorocebus aethiops (Green monkey) protein is Insulin (INS).